Consider the following 467-residue polypeptide: Ankyrin repeat and SOCS box protein 10 (467 aa).

7 ANK repeats span residues 115–144, 147–176, 180–209, 214–243, 247–289, 293–322, and 326–361; these read ELTT…KPDS, GGRT…DPNT, DGKR…QVDG, EEET…CPDV, EGWT…DADA, DKQR…NANA, and GGHT…AVRV. The region spanning 412–467 is the SOCS box domain; the sequence is YSSLFALVRQPRSLQHLCRCALRSHLEGCLPHALPRLPLPPRMLRFLQLDFEDLLY.

The protein belongs to the ankyrin SOCS box (ASB) family.

Its subcellular location is the nucleus. It localises to the cytoplasm. It functions in the pathway protein modification; protein ubiquitination. In terms of biological role, may be a substrate-recognition component of a SCF-like ECS (Elongin-Cullin-SOCS-box protein) E3 ubiquitin-protein ligase complex which mediates the ubiquitination and subsequent proteasomal degradation of target proteins. The sequence is that of Ankyrin repeat and SOCS box protein 10 (Asb10) from Mus musculus (Mouse).